A 1523-amino-acid polypeptide reads, in one-letter code: ATP-binding cassette sub-family C member 3 (1523 aa).

Topologically, residues 1 to 35 are extracellular; the sequence is MDRLCGSGELGSKFWDSNLSIYTNTPDLTPCFQNS. N-linked (GlcNAc...) asparagine glycosylation occurs at asparagine 18. Residues 36 to 56 form a helical membrane-spanning segment; that stretch reads LLAWVPCIYLWAALPCYLFYL. Topologically, residues 57–75 are cytoplasmic; it reads RHHQLGYIVLSWLSRLKTA. The chain crosses the membrane as a helical span at residues 76-96; sequence LGVLLWCVSWVDLFYSFHGLI. Residues 97–102 are Extracellular-facing; the sequence is HGSSPA. Residues 103–123 traverse the membrane as a helical segment; the sequence is PVFFVTPLVVGITMLLATLLI. Residues 124-129 lie on the Cytoplasmic side of the membrane; it reads QYERLR. A helical membrane pass occupies residues 130-150; that stretch reads GVQSSGVLIIFWLLCVICAII. The Extracellular segment spans residues 151–170; that stretch reads PFRSKILSALAEGKILDPFR. The helical transmembrane segment at 171 to 191 threads the bilayer; that stretch reads FTTFYIYFALVFCALILSCFK. Residues 192–301 lie on the Cytoplasmic side of the membrane; that stretch reads EKPPLFSPEN…KSKQPSFLRA (110 aa). A helical membrane pass occupies residues 302–324; that stretch reads LVRTFTSSLLMSACFNLIQNLLG. The ABC transmembrane type-1 1 domain maps to 310-593; it reads LLMSACFNLI…LPQLISGLTQ (284 aa). Topologically, residues 325–345 are extracellular; the sequence is FVNPQLLSILIRFISDPTAPT. A helical membrane pass occupies residues 346-366; it reads WWGFLLAGLMFLSSTMQTLIL. Over 367 to 419 the chain is Cytoplasmic; it reads HQYYHCIFVMALRLRTAIIGVIYRKALVITNSVKRESTVGEMVNLMSVDAQRF. Residues 420 to 440 traverse the membrane as a helical segment; the sequence is MDVSPFINLLWSAPLQVILAI. Position 441 (tyrosine 441) is a topological domain, extracellular. Residues 442–462 traverse the membrane as a helical segment; the sequence is FLWQILGPSALAGVAVIVLLI. Residues 463-535 are Cytoplasmic-facing; it reads PLNGAVSMKM…KGAYLQAIST (73 aa). The helical transmembrane segment at 536–556 threads the bilayer; the sequence is FIWICTPFLVTLITLGVYVYV. Residues 557 to 567 lie on the Extracellular side of the membrane; it reads DESNVLDAEKA. A helical membrane pass occupies residues 568–588; that stretch reads FVSLSLFNILKIPLNMLPQLI. Over 589 to 967 the chain is Cytoplasmic; it reads SGLTQASVSL…YAKSMGLCTT (379 aa). The ABC transporter 1 domain maps to 626–850; that stretch reads ITIHNGTFTW…DGSFANFLRN (225 aa). Residue 660-667 participates in ATP binding; the sequence is GPVGCGKS. 2 positions are modified to phosphoserine: serine 903 and serine 906. A compositionally biased stretch (polar residues) spans 903–915; it reads SSLSSEGEVQNRT. Positions 903–923 are disordered; sequence SSLSSEGEVQNRTMPKKHTNS. An ABC transmembrane type-1 2 domain is found at 967–1248; sequence TLSICLLYGG…MIRMISDLES (282 aa). Residues 968-988 traverse the membrane as a helical segment; sequence LSICLLYGGQSAAAIGANVWL. Topologically, residues 989 to 1013 are extracellular; it reads SAWSNDAEEHGQQNKTSVRLGVYAA. Asparagine 1002 is a glycosylation site (N-linked (GlcNAc...) asparagine). The helical transmembrane segment at 1014-1034 threads the bilayer; the sequence is LGILQGLLVMLSAFTMVVGAI. Over 1035–1071 the chain is Cytoplasmic; sequence QAARLLHEALLHNKIRSPQSFFDTTPSGRILNRFSKD. A helical membrane pass occupies residues 1072–1092; it reads IYVIDEVLAPTILMLLNSFFT. The Extracellular segment spans residues 1093–1096; that stretch reads SIST. Residues 1097–1117 form a helical membrane-spanning segment; the sequence is IMVIVASTPLFMVVVLPLAVL. Residues 1118-1191 lie on the Cytoplasmic side of the membrane; the sequence is YGFVQRFYVA…YPYIASNRWL (74 aa). A helical membrane pass occupies residues 1192 to 1212; that stretch reads GVHVEFVGNCVVLFAALFAVI. The Extracellular segment spans residues 1213–1219; that stretch reads GRNSLNP. The helical transmembrane segment at 1220-1240 threads the bilayer; the sequence is GLVGLSVSYALQVTMALNWMI. The Cytoplasmic segment spans residues 1241 to 1523; it reads RMISDLESNI…YGMAKDAGLA (283 aa). One can recognise an ABC transporter 2 domain in the interval 1287–1519; that stretch reads FRNYSVRYRP…GGIFYGMAKD (233 aa). Residue 1319 to 1326 participates in ATP binding; that stretch reads GRTGAGKS.

It belongs to the ABC transporter superfamily. ABCC family. Conjugate transporter (TC 3.A.1.208) subfamily. In terms of tissue distribution, detected throughout the gastrointestinal tract, liver, lung, pancreas, bladder, gall bladder and at low levels in the adrenal gland.

The protein localises to the basolateral cell membrane. It localises to the basal cell membrane. It catalyses the reaction an S-substituted glutathione(in) + ATP + H2O = an S-substituted glutathione(out) + ADP + phosphate + H(+). It carries out the reaction ATP + H2O + xenobioticSide 1 = ADP + phosphate + xenobioticSide 2.. The enzyme catalyses 17beta-estradiol 17-O-(beta-D-glucuronate)(in) + ATP + H2O = 17beta-estradiol 17-O-(beta-D-glucuronate)(out) + ADP + phosphate + H(+). The catalysed reaction is dehydroepiandrosterone 3-sulfate(in) + ATP + H2O = dehydroepiandrosterone 3-sulfate(out) + ADP + phosphate + H(+). It catalyses the reaction leukotriene C4(in) + ATP + H2O = leukotriene C4(out) + ADP + phosphate + H(+). It carries out the reaction taurocholate(in) + ATP + H2O = taurocholate(out) + ADP + phosphate + H(+). The enzyme catalyses glycocholate(in) + ATP + H2O = glycocholate(out) + ADP + phosphate + H(+). The catalysed reaction is taurolithocholate 3-sulfate(in) + ATP + H2O = taurolithocholate 3-sulfate(out) + ADP + phosphate + H(+). It catalyses the reaction taurochenodeoxycholate 3-sulfate(in) + ATP + H2O = taurochenodeoxycholate 3-sulfate(out) + ADP + phosphate + H(+). It carries out the reaction (4Z,15Z)-bilirubin IXalpha C8-beta-D-glucuronoside(in) + ATP + H2O = (4Z,15Z)-bilirubin IXalpha C8-beta-D-glucuronoside(out) + ADP + phosphate + H(+). The enzyme catalyses (4Z,15Z)-bilirubin IXalpha C8,C12-beta-D-bisglucuronoside(in) + ATP + H2O = (4Z,15Z)-bilirubin IXalpha C8,C12-beta-D-bisglucuronoside(out) + ADP + phosphate + H(+). ATP-dependent transporter of the ATP-binding cassette (ABC) family that binds and hydrolyzes ATP to enable active transport of various substrates including many drugs, toxicants and endogenous compound across cell membranes. Transports glucuronide conjugates such as bilirubin diglucuronide, estradiol-17-beta-o-glucuronide and GSH conjugates such as leukotriene C4 (LTC4). Transports also various bile salts (taurocholate, glycocholate, taurochenodeoxycholate-3-sulfate, taurolithocholate- 3-sulfate). Does not contribute substantially to bile salt physiology but provides an alternative route for the export of bile acids and glucuronides from cholestatic hepatocytes. May contribute to regulate the transport of organic compounds in testes across the blood-testis-barrier. The sequence is that of ATP-binding cassette sub-family C member 3 (Abcc3) from Mus musculus (Mouse).